We begin with the raw amino-acid sequence, 305 residues long: Taste receptor type 2 member 13 (305 aa).

At 1-7 the chain is on the extracellular side; sequence MGSNVYG. Residues 8-28 form a helical membrane-spanning segment; that stretch reads ILTMVMIAEFVFGNMSNGFIV. The Cytoplasmic segment spans residues 29 to 43; it reads LINCIDWVRKGTLSS. The chain crosses the membrane as a helical span at residues 44 to 64; the sequence is IGWILLFLAISRMVLIWEMLI. Residues 65–88 lie on the Extracellular side of the membrane; sequence TWIKYMKYSFSFVTGTELRGIMFT. A helical transmembrane segment spans residues 89–109; that stretch reads WVISNHFSLWLATILSIFYLL. The Cytoplasmic portion of the chain corresponds to 110 to 128; the sequence is KIASFSKPVFLYLKWREKK. Residues 129–149 traverse the membrane as a helical segment; that stretch reads VLLIVLLGNLIFLMLNILQIN. The Extracellular portion of the chain corresponds to 150-182; the sequence is KHIEHWMYQYERNITWSSRVSDFAGFSNLVLLE. A glycan (N-linked (GlcNAc...) asparagine) is linked at N162. The chain crosses the membrane as a helical span at residues 183 to 203; it reads MIVFSVTPFTVALVSFILLIF. Over 204-232 the chain is Cytoplasmic; it reads SLWKHLQKMHLNSRGERDPSTKAHVNALR. Residues 233-253 form a helical membrane-spanning segment; it reads IMVSFLLLYATYFISFFLSLI. Residues 254–262 are Extracellular-facing; it reads PMAHKTRLG. Residues 263-283 traverse the membrane as a helical segment; it reads LMFSITVGLFYPSSHSFILIL. The Cytoplasmic portion of the chain corresponds to 284–305; it reads GHSNLRQASLWVMTYLKCGQKH.

Belongs to the G-protein coupled receptor T2R family.

It is found in the cell membrane. Receptor that may play a role in the perception of bitterness and is gustducin-linked. May play a role in sensing the chemical composition of the gastrointestinal content. The activity of this receptor may stimulate alpha gustducin, mediate PLC-beta-2 activation and lead to the gating of TRPM5. This chain is Taste receptor type 2 member 13, found in Mus musculus (Mouse).